We begin with the raw amino-acid sequence, 1240 residues long: Ubiquitin carboxyl-terminal hydrolase 36 (1240 aa).

Disordered regions lie at residues 37–56 (AKTS…STDN) and 100–144 (SNGG…GTSA). Low complexity-rich tracts occupy residues 47–56 (SSTSGSSTDN) and 101–132 (NGGA…DNNG). The USP domain maps to 202-512 (TGMLNVGNTC…NAYIMFYELD (311 aa)). Cys-211 functions as the Nucleophile in the catalytic mechanism. The Proton acceptor role is filled by His-471. Residues 637–705 (ANKSSCNTLN…KMFEESSESV (69 aa)) form a disordered region. The segment covering 639–649 (KSSCNTLNNSK) has biased composition (polar residues). A compositionally biased stretch (low complexity) spans 650–662 (QHQPQQQQQQPQH). Residues 668 to 680 (SDEEEDSDDDNDN) show a composition bias toward acidic residues. Residue Thr-715 is modified to Phosphothreonine. 4 disordered regions span residues 723–818 (YESA…KQKT), 831–998 (YKNK…GESL), 1076–1163 (DMSS…EYES), and 1198–1240 (RFAG…QQQS). Phosphoserine occurs at positions 725 and 727. Low complexity predominate over residues 733–744 (QQQQQQQTLQQQ). Residues 759-769 (SDTDDDDDEEQ) are compositionally biased toward acidic residues. Low complexity predominate over residues 794–815 (NSSSSKTKSASNASSANVNSSK). The span at 843–859 (DDDDDDDEDEDEDEDEA) shows a compositional bias: acidic residues. A compositionally biased stretch (low complexity) spans 869 to 879 (TKSSSSSSSTS). The segment covering 880–890 (LTNGWQQSQNG) has biased composition (polar residues). Ser-895 bears the Phosphoserine mark. The residue at position 898 (Thr-898) is a Phosphothreonine. Ser-901 bears the Phosphoserine mark. Positions 918 to 941 (DEDDDENVDGVADADDDDDNDEVA) are enriched in acidic residues. A compositionally biased stretch (polar residues) spans 976 to 988 (LNGSSKSQQTTPR). The span at 1076-1103 (DMSSSSSSSSSTNSSSNSSSRSNGNSSN) shows a compositional bias: low complexity. Residues 1111 to 1120 (AEAREQRKRD) are compositionally biased toward basic and acidic residues. Low complexity predominate over residues 1231–1240 (QSSGQQQQQS).

The protein belongs to the peptidase C19 family. As to quaternary structure, interacts with atms/PAF1, but not with CycT.

The protein resides in the nucleus. Its subcellular location is the nucleolus. It catalyses the reaction Thiol-dependent hydrolysis of ester, thioester, amide, peptide and isopeptide bonds formed by the C-terminal Gly of ubiquitin (a 76-residue protein attached to proteins as an intracellular targeting signal).. Functionally, required for maintaining multiple types of adult stem cells, including male and female germline, epithelial follicle cell and intestinal stem cells. May function as a transcriptional repressor by continually deubiquiting histone H2B at the promoters of genes critical for cellular differentiation, thereby preventing histone H3 'Lys-4' trimethylation (H3K4). Controls selective autophagy activation by ubiquitinated proteins. This is Ubiquitin carboxyl-terminal hydrolase 36 (Usp36) from Drosophila grimshawi (Hawaiian fruit fly).